The sequence spans 292 residues: Acidic endochitinase (292 aa).

The N-terminal stretch at Met1–Ala25 is a signal peptide. Residues Ala26–Gly292 form the GH18 domain. 2 disulfides stabilise this stretch: Cys45-Cys92 and Cys75-Cys82. Glu152 acts as the Proton donor in catalysis. The cysteines at positions 180 and 209 are disulfide-linked.

This sequence belongs to the glycosyl hydrolase 18 family. Chitinase class II subfamily.

It localises to the secreted. It is found in the extracellular space. The catalysed reaction is Random endo-hydrolysis of N-acetyl-beta-D-glucosaminide (1-&gt;4)-beta-linkages in chitin and chitodextrins.. In terms of biological role, this protein functions as a defense against chitin containing fungal pathogens. This Cucumis sativus (Cucumber) protein is Acidic endochitinase.